The primary structure comprises 410 residues: SPbeta prophage-derived uncharacterized protein YonV (410 aa).

The sequence is that of SPbeta prophage-derived uncharacterized protein YonV (yonV) from Bacillus subtilis (strain 168).